Consider the following 725-residue polypeptide: MDKMKKPKINWLLIVIVGIIAALLITVLVLLFSPKTQPKSFDYLLKHFEEAAKSTTDDIYFETIKINSLDNTIGVIFRNGAMREEYFVAASAAQANFLTSGNVEVREILQLANVQAYIQSIKTLNGTISWFTFMNKFLAQHPGYDASKAGLFGQHIVQENGFITFIKAIWFPALIAIIIFLGYKAQSRAASGGIFNPGKNQAVIVKTDKKFTDIAGNKEPIEEVQELVDYLKNPKKYAAAGARFPKGILLGGPPGTGKTLLAKATAGEANVPFFFISASSFVELYVGLGAKRVREMFKEARKLAPAIIFIDELDAVGRSRGSGIGGGNDEREQTLNQILVEMDGINENAGILIMGATNRTDVLDPALLRPGRFDRIITVGLPDIKEREEILKLHSKGKRLSKEIKFDKIAKRTPGYSGAQLENVINEASLLSVREKTDVIISTQIDEAIDRVMAGPAKKSRVISQEELKAVAYHEAGHAVVGLKVKGGNKVQKITIIPRGNAGGYNLMTPEEEKYNASKKELLATIASYMGGRAAEMIIYGKENISTGASDDISRATKIARKMVTEWGMSALGPIKYEEDTENPFLGRDYSKGTFGSKMAHEIDLEIRKIISASEEIAIKAIEQNLELLELIKDSLLENETIVAEEIEYIEKNMKLPPNNEKIKPDGESKKVNIEDLINQVNESQEKDKQKNAQIKEDLSKMDKKDNLTKAKDKGEEETLAEKAE.

Residues 1–11 (MDKMKKPKINW) are Cytoplasmic-facing. Residues 12 to 32 (LLIVIVGIIAALLITVLVLLF) form a helical membrane-spanning segment. Residues 33 to 160 (SPKTQPKSFD…LFGQHIVQEN (128 aa)) are Extracellular-facing. The chain crosses the membrane as a helical span at residues 161-181 (GFITFIKAIWFPALIAIIIFL). Over 182 to 725 (GYKAQSRAAS…EEETLAEKAE (544 aa)) the chain is Cytoplasmic. Residue 252–259 (GPPGTGKT) coordinates ATP. His-474 is a Zn(2+) binding site. Glu-475 is a catalytic residue. 2 residues coordinate Zn(2+): His-478 and Asp-552. The disordered stretch occupies residues 680–725 (QVNESQEKDKQKNAQIKEDLSKMDKKDNLTKAKDKGEEETLAEKAE). Residues 684–725 (SQEKDKQKNAQIKEDLSKMDKKDNLTKAKDKGEEETLAEKAE) show a composition bias toward basic and acidic residues.

The protein in the central section; belongs to the AAA ATPase family. This sequence in the C-terminal section; belongs to the peptidase M41 family. Homohexamer. Requires Zn(2+) as cofactor.

It is found in the cell membrane. Functionally, acts as a processive, ATP-dependent zinc metallopeptidase for both cytoplasmic and membrane proteins. Plays a role in the quality control of integral membrane proteins. The chain is ATP-dependent zinc metalloprotease FtsH from Mycoplasmopsis pulmonis (strain UAB CTIP) (Mycoplasma pulmonis).